Here is a 93-residue protein sequence, read N- to C-terminus: Regulatory protein RepI (93 aa).

Functionally, this protein is involved in regulating the plasmid copy-number. Increasing the level of this protein results in a higher plasmid copy-number. The chain is Regulatory protein RepI (repI) from Escherichia coli.